Here is a 251-residue protein sequence, read N- to C-terminus: Triosephosphate isomerase (251 aa).

9–11 provides a ligand contact to substrate; it reads NWK. H95 functions as the Electrophile in the catalytic mechanism. The active-site Proton acceptor is the E167. Residues G173, S213, and 234-235 contribute to the substrate site; that span reads GG. Position 213 is a phosphoserine (S213).

Belongs to the triosephosphate isomerase family. In terms of assembly, homodimer.

It localises to the cytoplasm. The catalysed reaction is D-glyceraldehyde 3-phosphate = dihydroxyacetone phosphate. The protein operates within carbohydrate biosynthesis; gluconeogenesis. Its pathway is carbohydrate degradation; glycolysis; D-glyceraldehyde 3-phosphate from glycerone phosphate: step 1/1. Involved in the gluconeogenesis. Catalyzes stereospecifically the conversion of dihydroxyacetone phosphate (DHAP) to D-glyceraldehyde-3-phosphate (G3P). The protein is Triosephosphate isomerase of Bacillus cereus (strain G9842).